The primary structure comprises 155 residues: Probable calcium-binding protein CML44 (155 aa).

EF-hand domains follow at residues 6–41 (ITTNDLRRMFKTLDKNQDGLVTLDELLWILDKLGWA), 85–120 (DNDEAIARAFNVFDVNGDGYISAEELRDVLERLGFE), and 130–155 (RMIRVHDKNLDGFVDFEEFKNMILHV). Ca(2+)-binding residues include Asp-19, Asn-21, Asp-23, Glu-30, Asp-98, Asn-100, Asp-102, Tyr-104, and Glu-109.

In terms of biological role, potential calcium sensor. This Arabidopsis thaliana (Mouse-ear cress) protein is Probable calcium-binding protein CML44 (CML44).